Consider the following 155-residue polypeptide: Protein-export protein SecB 1 (155 aa).

Belongs to the SecB family. As to quaternary structure, homotetramer, a dimer of dimers. One homotetramer interacts with 1 SecA dimer.

The protein localises to the cytoplasm. Functionally, one of the proteins required for the normal export of preproteins out of the cell cytoplasm. It is a molecular chaperone that binds to a subset of precursor proteins, maintaining them in a translocation-competent state. It also specifically binds to its receptor SecA. In Polaromonas naphthalenivorans (strain CJ2), this protein is Protein-export protein SecB 1.